A 252-amino-acid chain; its full sequence is dITP/XTP pyrophosphatase (252 aa).

Substrate is bound at residue 7–12 (THNEGK). The active-site Proton acceptor is the aspartate 74. Aspartate 74 contributes to the Mg(2+) binding site. Substrate is bound by residues serine 75 and 193–196 (FGYD). The disordered stretch occupies residues 201–224 (PDDQPAGRVSTEPDHEGEPLTSAE). Substrate is bound by residues lysine 230 and 235-236 (HR).

It belongs to the HAM1 NTPase family. Homodimer. Requires Mg(2+) as cofactor.

The catalysed reaction is XTP + H2O = XMP + diphosphate + H(+). It carries out the reaction dITP + H2O = dIMP + diphosphate + H(+). The enzyme catalyses ITP + H2O = IMP + diphosphate + H(+). Its function is as follows. Pyrophosphatase that catalyzes the hydrolysis of nucleoside triphosphates to their monophosphate derivatives, with a high preference for the non-canonical purine nucleotides XTP (xanthosine triphosphate), dITP (deoxyinosine triphosphate) and ITP. Seems to function as a house-cleaning enzyme that removes non-canonical purine nucleotides from the nucleotide pool, thus preventing their incorporation into DNA/RNA and avoiding chromosomal lesions. This Bifidobacterium longum subsp. infantis (strain ATCC 15697 / DSM 20088 / JCM 1222 / NCTC 11817 / S12) protein is dITP/XTP pyrophosphatase.